The chain runs to 89 residues: Small ribosomal subunit protein uS15 (89 aa).

Basic and acidic residues predominate over residues 1–13 (MYLTSEKKEEIFS). The interval 1 to 24 (MYLTSEKKEEIFSKHGKGKNDTGS) is disordered.

This sequence belongs to the universal ribosomal protein uS15 family. Part of the 30S ribosomal subunit. Forms a bridge to the 50S subunit in the 70S ribosome, contacting the 23S rRNA.

In terms of biological role, one of the primary rRNA binding proteins, it binds directly to 16S rRNA where it helps nucleate assembly of the platform of the 30S subunit by binding and bridging several RNA helices of the 16S rRNA. Its function is as follows. Forms an intersubunit bridge (bridge B4) with the 23S rRNA of the 50S subunit in the ribosome. The polypeptide is Small ribosomal subunit protein uS15 (Christiangramia forsetii (strain DSM 17595 / CGMCC 1.15422 / KT0803) (Gramella forsetii)).